Consider the following 86-residue polypeptide: Chymotrypsin inhibitor (86 aa).

The first 22 residues, 1–22, serve as a signal peptide directing secretion; it reads MKLLFAIVALLALAFLCADISA.

The protein belongs to the protease inhibitor I13 (potato type I serine protease inhibitor) family. In terms of assembly, monomer. In terms of tissue distribution, expressed in the body wall, coelomocytes and at a lower level in intestine.

It is found in the secreted. Inhibits L.terrestris digestive chymotrypsin LT_CH 1 and bovine alpha-chymotrypsin. This chain is Chymotrypsin inhibitor, found in Lumbricus terrestris (Common earthworm).